We begin with the raw amino-acid sequence, 249 residues long: 2,3-bisphosphoglycerate-dependent phosphoglycerate mutase (249 aa).

Substrate-binding positions include Arg8–Asn15, Thr21–Gly22, Arg60, Glu87–Tyr90, Lys98, Arg114–Arg115, and Gly183–Asn184. The Tele-phosphohistidine intermediate role is filled by His9. The active-site Proton donor/acceptor is Glu87.

It belongs to the phosphoglycerate mutase family. BPG-dependent PGAM subfamily.

The enzyme catalyses (2R)-2-phosphoglycerate = (2R)-3-phosphoglycerate. The protein operates within carbohydrate degradation; glycolysis; pyruvate from D-glyceraldehyde 3-phosphate: step 3/5. Functionally, catalyzes the interconversion of 2-phosphoglycerate and 3-phosphoglycerate. This is 2,3-bisphosphoglycerate-dependent phosphoglycerate mutase from Methanosphaerula palustris (strain ATCC BAA-1556 / DSM 19958 / E1-9c).